We begin with the raw amino-acid sequence, 260 residues long: Pro-thyrotropin-releasing hormone (260 aa).

The signal sequence occupies residues 1–24; the sequence is MPSIQLPVLLLCLTLSGVCLNGRQ. The interval 72–112 is disordered; the sequence is PQWLSKRQHPGKRYISDPEKRQHPGKRDVEEKASFGDIQKR. Glutamine 79 carries the pyrrolidone carboxylic acid modification. The residue at position 81 (proline 81) is a Proline amide. Positions 85-112 are enriched in basic and acidic residues; that stretch reads YISDPEKRQHPGKRDVEEKASFGDIQKR. At glutamine 93 the chain carries Pyrrolidone carboxylic acid. The residue at position 95 (proline 95) is a Proline amide. Residue glutamine 113 is modified to Pyrrolidone carboxylic acid. Leucine 115 is subject to Leucine amide. Glutamine 134 bears the Pyrrolidone carboxylic acid mark. Proline amide is present on proline 136. The residue at position 163 (glutamine 163) is a Pyrrolidone carboxylic acid. Proline 165 carries the proline amide modification. Basic and acidic residues predominate over residues 195–207; the sequence is KHQQFGNRDRDSD. 2 disordered regions span residues 195–217 and 238–260; these read KHQQ…PCDL and KEGV…ETEE. Glutamine 246 carries the post-translational modification Pyrrolidone carboxylic acid. Proline 248 is subject to Proline amide.

Belongs to the TRH family.

It is found in the secreted. Functions as a regulator of the biosynthesis of TSH in the anterior pituitary gland and as a neurotransmitter/ neuromodulator in the central and peripheral nervous systems. This Gallus gallus (Chicken) protein is Pro-thyrotropin-releasing hormone (TRH).